The chain runs to 130 residues: Small ribosomal subunit protein uS9 (130 aa).

This sequence belongs to the universal ribosomal protein uS9 family.

The polypeptide is Small ribosomal subunit protein uS9 (Xylella fastidiosa (strain 9a5c)).